The following is a 194-amino-acid chain: Ribosomal RNA large subunit methyltransferase E (194 aa).

S-adenosyl-L-methionine contacts are provided by G48, W50, D66, N82, and D110. Residue K150 is the Proton acceptor of the active site.

This sequence belongs to the class I-like SAM-binding methyltransferase superfamily. RNA methyltransferase RlmE family.

The protein localises to the cytoplasm. It catalyses the reaction uridine(2552) in 23S rRNA + S-adenosyl-L-methionine = 2'-O-methyluridine(2552) in 23S rRNA + S-adenosyl-L-homocysteine + H(+). Specifically methylates the uridine in position 2552 of 23S rRNA at the 2'-O position of the ribose in the fully assembled 50S ribosomal subunit. This Picrophilus torridus (strain ATCC 700027 / DSM 9790 / JCM 10055 / NBRC 100828 / KAW 2/3) protein is Ribosomal RNA large subunit methyltransferase E.